Here is an 83-residue protein sequence, read N- to C-terminus: Molybdopterin synthase sulfur carrier subunit (83 aa).

It belongs to the MoaD family.

The protein operates within cofactor biosynthesis; molybdopterin biosynthesis. Functionally, involved in sulfur transfer in the conversion of molybdopterin precursor Z to molybdopterin. Probably plays a role in host phagosome maturation arrest. This chain is Molybdopterin synthase sulfur carrier subunit (moaD1), found in Mycobacterium tuberculosis (strain ATCC 25618 / H37Rv).